Reading from the N-terminus, the 124-residue chain is uncharacterized protein (124 aa).

The segment at 73-94 adopts a dksA C4-type; degenerate zinc-finger fold; the sequence is CEETGAPIPLAKLAVLPTARTA.

This is an uncharacterized protein from Bacillus subtilis (strain 168).